Here is a 165-residue protein sequence, read N- to C-terminus: Small ribosomal subunit protein uS5 (165 aa).

The S5 DRBM domain maps to 13–76; that stretch reads LEEKVLVVNR…DAARKNLVSI (64 aa).

Belongs to the universal ribosomal protein uS5 family. In terms of assembly, part of the 30S ribosomal subunit. Contacts proteins S4 and S8.

In terms of biological role, with S4 and S12 plays an important role in translational accuracy. Located at the back of the 30S subunit body where it stabilizes the conformation of the head with respect to the body. This Chlamydia muridarum (strain MoPn / Nigg) protein is Small ribosomal subunit protein uS5.